Here is a 374-residue protein sequence, read N- to C-terminus: Outer membrane protein assembly factor BamC (374 aa).

The signal sequence occupies residues 1 to 22; sequence MSKFYKSGRVTTAVIVALSLSA. A lipid anchor (N-palmitoyl cysteine) is attached at cysteine 23. Cysteine 23 carries the S-diacylglycerol cysteine lipid modification.

The protein belongs to the BamC family. In terms of assembly, part of the Bam complex.

The protein localises to the cell outer membrane. In terms of biological role, part of the outer membrane protein assembly complex, which is involved in assembly and insertion of beta-barrel proteins into the outer membrane. The chain is Outer membrane protein assembly factor BamC from Psychromonas ingrahamii (strain DSM 17664 / CCUG 51855 / 37).